The primary structure comprises 811 residues: Ent-13-epi-manoyl oxide synthase KSL2, chloroplastic (811 aa).

The N-terminal 49 residues, 1-49 (MALPLSTCLLFHPKESRSRRFCFSPASAASLKSGLHSATSAKIASMPTC), are a transit peptide targeting the chloroplast. Mg(2+) is bound by residues Asp-550, Asp-554, Asn-694, and Glu-702. A DDXXD motif motif is present at residues 550–554 (DDFFD).

It belongs to the terpene synthase family. Mg(2+) serves as cofactor.

Its subcellular location is the plastid. It localises to the chloroplast. The catalysed reaction is ent-8alpha-hydroxylabd-13-en-15-yl diphosphate = ent-13-epi-manoyl oxide + diphosphate. It participates in secondary metabolite biosynthesis; terpenoid biosynthesis. Functionally, involved in diterpenoid biosynthesis. Catalyzes the conversion of ent-8alpha-hydroxylabd-13-en-15-yl diphosphate to ent-13-epi-manoyl oxide. The polypeptide is Ent-13-epi-manoyl oxide synthase KSL2, chloroplastic (Salvia miltiorrhiza (Chinese sage)).